We begin with the raw amino-acid sequence, 258 residues long: Ribosomal RNA small subunit methyltransferase A (258 aa).

Residues His-13, Leu-15, Gly-40, Glu-61, Asp-86, and Asn-106 each coordinate S-adenosyl-L-methionine.

The protein belongs to the class I-like SAM-binding methyltransferase superfamily. rRNA adenine N(6)-methyltransferase family. RsmA subfamily.

The protein localises to the cytoplasm. It catalyses the reaction adenosine(1518)/adenosine(1519) in 16S rRNA + 4 S-adenosyl-L-methionine = N(6)-dimethyladenosine(1518)/N(6)-dimethyladenosine(1519) in 16S rRNA + 4 S-adenosyl-L-homocysteine + 4 H(+). Functionally, specifically dimethylates two adjacent adenosines (A1518 and A1519) in the loop of a conserved hairpin near the 3'-end of 16S rRNA in the 30S particle. May play a critical role in biogenesis of 30S subunits. This Coxiella burnetii (strain RSA 331 / Henzerling II) protein is Ribosomal RNA small subunit methyltransferase A.